The chain runs to 518 residues: Hyccin (518 aa).

2 disordered regions span residues 385–410 (GLRR…MDQL) and 466–492 (VFSG…EGVA). Residues 393-403 (SSKEKDKEKDA) show a composition bias toward basic and acidic residues. Polar residues predominate over residues 466–484 (VFSGNQPSSRASSPTSNHV).

Belongs to the Hyccin family. In terms of assembly, component of a phosphatidylinositol 4-kinase (PI4K) complex.

It is found in the cytoplasm. The protein resides in the cytosol. Its subcellular location is the cell membrane. Functionally, component of a complex required to localize phosphatidylinositol 4-kinase (PI4K) to the plasma membrane. The complex acts as a regulator of phosphatidylinositol 4-phosphate (PtdIns(4)P) synthesis. In Danio rerio (Zebrafish), this protein is Hyccin (hycc1).